We begin with the raw amino-acid sequence, 229 residues long: Wtf element wtf14 (229 aa).

A compositionally biased stretch (basic and acidic residues) spans 1 to 26 (MENNHHLAKDSLDELNPKRGKGEHET). A disordered region spans residues 1–27 (MENNHHLAKDSLDELNPKRGKGEHETQ). Helical transmembrane passes span 71-91 (IPAVLLPVFVINIALFKYLVF), 100-120 (VLFGLGNGGINIFSMWLLLAT), 151-171 (LYAILKLTFVNAFAIPLLMFF), and 188-208 (VIGVMLNVAYFIIEIENPGLF).

Belongs to the WTF family.

Its subcellular location is the endoplasmic reticulum membrane. Its function is as follows. May act in meiotic drive. This Schizosaccharomyces kambucha (Fission yeast) protein is Wtf element wtf14.